A 671-amino-acid polypeptide reads, in one-letter code: cGMP-dependent protein kinase 1 (671 aa).

At serine 2 the chain carries N-acetylserine. The stretch at serine 2–threonine 59 forms a coiled coil. The segment at serine 2–aspartate 102 is required for dimerization. Residues alanine 9 to glutamine 44 are leucine-zipper. The tract at residues proline 50–histidine 75 is autoinhibitory domain. Position 59 is a phosphothreonine; by autocatalysis (threonine 59). A cGMP-binding, high affinity region spans residues phenylalanine 103–proline 220. Residues glycine 167–alanine 170, arginine 177–threonine 178, arginine 282, glycine 291–alanine 294, arginine 301–threonine 302, and tyrosine 336 each bind 3',5'-cyclic GMP. The cGMP-binding, low affinity stretch occupies residues threonine 221–alanine 341. One can recognise a Protein kinase domain in the interval phenylalanine 360–phenylalanine 619. Residues leucine 366 to valine 374 and lysine 390 each bind ATP. Catalysis depends on aspartate 484, which acts as the Proton acceptor. Position 515 is a phosphothreonine (threonine 515). In terms of domain architecture, AGC-kinase C-terminal spans glutamate 620–phenylalanine 671. The segment at proline 635–phenylalanine 671 is disordered. The span at phenylalanine 652–proline 661 shows a compositional bias: acidic residues.

This sequence belongs to the protein kinase superfamily. AGC Ser/Thr protein kinase family. cGMP subfamily. In terms of assembly, isoform alpha: parallel homodimer or heterodimer and also heterotetramer. Interacts directly with PPP1R12A. Non-covalent dimer of dimer of PRKG1-PRKG1 and PPP1R12A-PPP1R12A. This interaction targets PRKG1 to stress fibers to mediate smooth muscle cell relaxation and vasodilation in responses to rises in cGMP. Isoform beta: antiparallel homodimer. Part of cGMP kinase signaling complex at least composed of ACTA2/alpha-actin, CNN1/calponin H1, PLN/phospholamban, PRKG1 and ITPR1. Interacts with IRAG1. Forms a stable complex with ITPR1, IRAG1, and isoform beta of PRKG1. Interacts with TRPC7 (via ankyrin repeat domain). Isoform alpha interacts with RGS2. Interacts with GTF2I. Post-translationally, autophosphorylation increases kinase activity. In terms of processing, 65 kDa monomer is produced by proteolytic cleavage. As to expression, detected in cerebellum, hippocampus, dorsomedial hypothalamus, medulla, subcommissural organ, cerebral cortex, amygdala, habenulae, various hypothalamic regions, olfactory bulb, pituitary gland, and retina. Isoform alpha is prominent in the cerebellum and medulla, whereas isoform Beta is predominant in the cortex, hippocampus, hypothalamus, and olfactory bulb.

The protein resides in the cytoplasm. The catalysed reaction is L-seryl-[protein] + ATP = O-phospho-L-seryl-[protein] + ADP + H(+). It carries out the reaction L-threonyl-[protein] + ATP = O-phospho-L-threonyl-[protein] + ADP + H(+). With respect to regulation, in the absence of cGMP, PRKG1 activity is suppressed by autoinhibitory contacts. Serine/threonine protein kinase that acts as a key mediator of the nitric oxide (NO)/cGMP signaling pathway. GMP binding activates PRKG1, which phosphorylates serines and threonines on many cellular proteins. Numerous protein targets for PRKG1 phosphorylation are implicated in modulating cellular calcium, but the contribution of each of these targets may vary substantially among cell types. Proteins that are phosphorylated by PRKG1 regulate platelet activation and adhesion, smooth muscle contraction, cardiac function, gene expression, feedback of the NO-signaling pathway, and other processes involved in several aspects of the CNS like axon guidance, hippocampal and cerebellar learning, circadian rhythm and nociception. Smooth muscle relaxation is mediated through lowering of intracellular free calcium, by desensitization of contractile proteins to calcium, and by decrease in the contractile state of smooth muscle or in platelet activation. Regulates intracellular calcium levels via several pathways: phosphorylates IRAG1 and inhibits IP3-induced Ca(2+) release from intracellular stores, phosphorylation of KCNMA1 (BKCa) channels decreases intracellular Ca(2+) levels, which leads to increased opening of this channel. PRKG1 phosphorylates the canonical transient receptor potential channel (TRPC) family which inactivates the associated inward calcium current. Another mode of action of NO/cGMP/PKGI signaling involves PKGI-mediated inactivation of the Ras homolog gene family member A (RhoA). Phosphorylation of RHOA by PRKG1 blocks the action of this protein in myriad processes: regulation of RHOA translocation; decreasing contraction; controlling vesicle trafficking, reduction of myosin light chain phosphorylation resulting in vasorelaxation. Activation of PRKG1 by NO signaling also alters gene expression in a number of tissues. In smooth muscle cells, increased cGMP and PRKG1 activity influence expression of smooth muscle-specific contractile proteins, levels of proteins in the NO/cGMP signaling pathway, down-regulation of the matrix proteins osteopontin and thrombospondin-1 to limit smooth muscle cell migration and phenotype. Regulates vasodilator-stimulated phosphoprotein (VASP) functions in platelets and smooth muscle. This is cGMP-dependent protein kinase 1 (Prkg1) from Mus musculus (Mouse).